The following is a 236-amino-acid chain: Class B acid phosphatase (236 aa).

The first 22 residues, 1 to 22, serve as a signal peptide directing secretion; that stretch reads MNHTLRSITLVLACVASLSANA. Catalysis depends on aspartate 70, which acts as the Nucleophile. Mg(2+)-binding residues include aspartate 70 and aspartate 72. Aspartate 72 functions as the Proton donor in the catalytic mechanism. Residues 138-139 and lysine 176 each bind substrate; that span reads TG. Aspartate 191 lines the Mg(2+) pocket.

This sequence belongs to the class B bacterial acid phosphatase family. Homotetramer. The cofactor is Mg(2+).

Its subcellular location is the periplasm. It catalyses the reaction a phosphate monoester + H2O = an alcohol + phosphate. Functionally, dephosphorylates several organic phosphate monoesters. Also has a phosphotransferase activity catalyzing the transfer of low-energy phosphate groups from organic phosphate monoesters to free hydroxyl groups of various organic compounds. In Marinomonas sp. (strain MWYL1), this protein is Class B acid phosphatase.